The following is a 393-amino-acid chain: Major tail sheath protein (393 aa).

This sequence belongs to the myoviridae tail sheath protein family.

It localises to the virion. Its function is as follows. Forms the virus contractile tail sheath. This is Major tail sheath protein from Serratia phage KSP20 (Serratia marcescens bacteriophage KSP20).